Consider the following 80-residue polypeptide: 14-3-3-like protein 1 (80 aa).

The protein belongs to the 14-3-3 family.

The sequence is that of 14-3-3-like protein 1 from Pseudotsuga menziesii (Douglas-fir).